A 164-amino-acid chain; its full sequence is Coenzyme Q-binding protein coq10, mitochondrial (164 aa).

This sequence belongs to the COQ10 family. Interacts with coenzyme Q.

The protein localises to the mitochondrion inner membrane. Functionally, required for the function of coenzyme Q in the respiratory chain. May serve as a chaperone or may be involved in the transport of Q6 from its site of synthesis to the catalytic sites of the respiratory complexes. The sequence is that of Coenzyme Q-binding protein coq10, mitochondrial from Schizosaccharomyces pombe (strain 972 / ATCC 24843) (Fission yeast).